The following is a 428-amino-acid chain: UDP-N-acetylglucosamine 1-carboxyvinyltransferase (428 aa).

25–26 (KN) is a binding site for phosphoenolpyruvate. Arg-102 contributes to the UDP-N-acetyl-alpha-D-glucosamine binding site. The Proton donor role is filled by Cys-126. Residue Cys-126 is modified to 2-(S-cysteinyl)pyruvic acid O-phosphothioketal. 2 residues coordinate UDP-N-acetyl-alpha-D-glucosamine: Asp-316 and Val-338.

This sequence belongs to the EPSP synthase family. MurA subfamily.

Its subcellular location is the cytoplasm. It catalyses the reaction phosphoenolpyruvate + UDP-N-acetyl-alpha-D-glucosamine = UDP-N-acetyl-3-O-(1-carboxyvinyl)-alpha-D-glucosamine + phosphate. It functions in the pathway cell wall biogenesis; peptidoglycan biosynthesis. In terms of biological role, cell wall formation. Adds enolpyruvyl to UDP-N-acetylglucosamine. The polypeptide is UDP-N-acetylglucosamine 1-carboxyvinyltransferase (Anaplasma marginale (strain St. Maries)).